Reading from the N-terminus, the 462-residue chain is GTPase Der (462 aa).

EngA-type G domains lie at 2–164 (KKIA…PKKE) and 195–366 (INVA…KNYS). Residues 8–15 (GKPNVGKS), 55–59 (DTGGI), 116–119 (NKID), 201–208 (GRVNVGKS), 248–252 (DTAGI), and 312–315 (NKWD) each bind GTP. The KH-like domain maps to 367–451 (TWLPTGQLNR…PIILRPRKRG (85 aa)).

Belongs to the TRAFAC class TrmE-Era-EngA-EngB-Septin-like GTPase superfamily. EngA (Der) GTPase family. Associates with the 50S ribosomal subunit.

GTPase that plays an essential role in the late steps of ribosome biogenesis. This is GTPase Der from Nitratiruptor sp. (strain SB155-2).